The following is a 287-amino-acid chain: Nucleotide-binding protein HD_0584 (287 aa).

G8–S15 is an ATP binding site. D56–N59 serves as a coordination point for GTP.

It belongs to the RapZ-like family.

In terms of biological role, displays ATPase and GTPase activities. The chain is Nucleotide-binding protein HD_0584 from Haemophilus ducreyi (strain 35000HP / ATCC 700724).